A 129-amino-acid polypeptide reads, in one-letter code: Small ribosomal subunit protein uS11 (129 aa).

This sequence belongs to the universal ribosomal protein uS11 family. Part of the 30S ribosomal subunit. Interacts with proteins S7 and S18. Binds to IF-3.

Its function is as follows. Located on the platform of the 30S subunit, it bridges several disparate RNA helices of the 16S rRNA. Forms part of the Shine-Dalgarno cleft in the 70S ribosome. In Haemophilus influenzae (strain ATCC 51907 / DSM 11121 / KW20 / Rd), this protein is Small ribosomal subunit protein uS11.